The chain runs to 361 residues: uncharacterized protein (361 aa).

Residue 33–40 participates in ATP binding; that stretch reads GPINSGKT.

The protein belongs to the archaeal ATPase family.

This is an uncharacterized protein from Methanocaldococcus jannaschii (strain ATCC 43067 / DSM 2661 / JAL-1 / JCM 10045 / NBRC 100440) (Methanococcus jannaschii).